A 72-amino-acid chain; its full sequence is Small ribosomal subunit protein bS18 (72 aa).

Belongs to the bacterial ribosomal protein bS18 family. In terms of assembly, part of the 30S ribosomal subunit. Forms a tight heterodimer with protein bS6.

Functionally, binds as a heterodimer with protein bS6 to the central domain of the 16S rRNA, where it helps stabilize the platform of the 30S subunit. The sequence is that of Small ribosomal subunit protein bS18 from Francisella tularensis subsp. novicida (strain U112).